The sequence spans 791 residues: MSNQQEKYEAQNIVNSTEESDDAFDTVTIPVPSEEPQESDQTEEHESGIEQFSESHAIHVEEQSDQSFSSLEPDNEQLMEEVISPRQVSYTPQHHEKQYAMQRPNDDSLAFLDKIKSVKESLQESVEDSLATVKVVLIPVGQEIVIPFKVDTILKYLKDHFSHLLGIPHSVLQIRYSGKILKNNETLVQHGVKPQEIVQVEIFSTNPDLYPVRRIDGLTDVSQIITVTVQTGLDQYQQVPVEIVKSDFHKPFLGGFRHKVTGVEYHNAGTQTVPKRIPERLSIFCRDTQTVFQKKNLQQTTNTTSTQMTNIGVYVSNMTDKLVTPGKYFSAAEYHAQRLKAVIVIQTYYRQWHAKIFVENLRRQKSLRLEWETQQELRKIREKEEWIKLDYHRRHNPKTNEDFEFLYNALEFWRQEELTRINQSFTGAERKAALCELLEKETQIIASIGRHRYIAYMANQEAAIQAFLDKCSAPKIWRTPNGKTIEMDTQFTIRARELQNIYKCIMLKNISQDERLDVLLTLKHTVKEHECKLTQEILELIDREVDLMMRGVKHHNLEGLRKRIATLFFHYIKTPLFNPEVAKYLKVPQDPLKFYKKIYFCHSCQLYLPSTEFSVSSTSRRIYRCRNCINLQNEAQKRESFLKYKCLLQQLYYTEADYEDDSKIAFLMQLQDIQYLTENIWASQSVLSACDNLSDLVMVRWNKSLEWSPWNCILLTKDEAAAHLKLTSIEEGYERSFIHKIKHKHILAKNYFSQVPVLASFILDDGEIDEIRWKYHSDTTPKIIESQRPPH.

The segment at 1–73 (MSNQQEKYEA…SDQSFSSLEP (73 aa)) is disordered. In terms of domain architecture, Ubiquitin-like spans 131-207 (ATVKVVLIPV…VQVEIFSTNP (77 aa)). Positions 338–367 (RLKAVIVIQTYYRQWHAKIFVENLRRQKSL) constitute an IQ domain.

Component of the axonemal radial spoke 1 (RS1) complex, at least composed of spoke head proteins RSPH1, RSPH3, RSPH9 and the cilia-specific component RSPH4A or sperm-specific component RSPH6A, spoke stalk proteins RSPH14, DNAJB13, DYDC1, ROPN1L and NME5, and the anchor protein IQUB. Does not appear to be part of radial spoke complexes 2 or 3 (RS2 or RS3). Interacts with CALM1. Interacts with DNAJB13. Interacts with DYNLL2. Interacts with NME5. Interacts with RSPH3. Interacts with RSPH9. Interacts with ZMYND10. Interacts with calmodulin; the interaction occurs in conditions of low but not high calcium.

Its subcellular location is the cytoplasm. The protein resides in the cytoskeleton. The protein localises to the flagellum axoneme. It is found in the cell projection. It localises to the cilium. In terms of biological role, adapter protein that anchors the radial spoke 1 (RS1) complex to the A microtubule of outer doublet microtubules in axonemes. The triple radial spokes (RS1, RS2 and RS3) are required to modulate beating of the sperm flagellum. May play a role in inhibiting signaling via MAPK1/ERK2 and MAPK3/ERK1. Additionally, may play a role in the functioning of cilia. Not required for the functioning of tracheal or ependymal cilia. The chain is IQ motif and ubiquitin-like domain-containing protein (IQUB) from Homo sapiens (Human).